We begin with the raw amino-acid sequence, 669 residues long: MVTGPDMLWLVITSGIACFFMAFVTGANDIANTFSTSIGSKAISIKKALIVAFFFEALGASLLGGTVTDSIRSKIINFQVFYDTPEFLMLGMCCALMGATVWLAVATRAGLPVSTTHSIIGALLGFGLATGNMKSIKWEKINNIVISWLAAPILAGTCSAIAFTVLRMLILRKKNSFEIIKKMYWFLIFLITLPFSVFLIFHNPIVINTQCKMKKDGKVIVSSPCYIEDWSAAHSFYASIICILLSSLLTAIGSFVIYIIYNKRINNYNLKKKIFCEELADIEKNPQNNFCAINNSSLNSVASNETQLTQAHNNTSNGTKQNQVGNGTKSNNNNVLVLPGDKNVKSQQDDSKTNGTQKTGSVEAYHVVHIKDNGSEDKSHENMLKKNLDKVTNMNENNNNSNKNNNSNKNNNSNKNNNSNKNNNSNNGNSNEGNGKGGDPKNMENVIIENFDPQTEIVFSSLQIISAILGVVAQSANDTANAIGPFAAVFNTYNNGIRGKIKVQWYILLFGGLSMSLGLSIMGYRVIKTVGMKLIKITPARGFTIELISGLVVLFFSICGIPLSSTHCAVSSVIGLGLVEAKMNADNKRHARKSMDKDIIQVDKDKSFTLTEKIKYPFSFLNTSCVNLRLFRTVFLSWILTVVFSATVTAGIYSFAAYSPSYIMKMQTV.

At 1-6 the chain is on the extracellular side; that stretch reads MVTGPD. A helical transmembrane segment spans residues 7–27; it reads MLWLVITSGIACFFMAFVTGA. Over 28–47 the chain is Cytoplasmic; that stretch reads NDIANTFSTSIGSKAISIKK. The chain crosses the membrane as a helical span at residues 48–68; the sequence is ALIVAFFFEALGASLLGGTVT. Residues 69-86 are Extracellular-facing; sequence DSIRSKIINFQVFYDTPE. Residues 87 to 107 form a helical membrane-spanning segment; that stretch reads FLMLGMCCALMGATVWLAVAT. Residue Arg-108 is a topological domain, cytoplasmic. Residues 109-129 form a helical membrane-spanning segment; sequence AGLPVSTTHSIIGALLGFGLA. At 130–143 the chain is on the extracellular side; it reads TGNMKSIKWEKINN. A helical membrane pass occupies residues 144–164; that stretch reads IVISWLAAPILAGTCSAIAFT. At 165–186 the chain is on the cytoplasmic side; the sequence is VLRMLILRKKNSFEIIKKMYWF. Residues 187–207 form a helical membrane-spanning segment; it reads LIFLITLPFSVFLIFHNPIVI. Topologically, residues 208–239 are extracellular; that stretch reads NTQCKMKKDGKVIVSSPCYIEDWSAAHSFYAS. Residues 240-260 traverse the membrane as a helical segment; it reads IICILLSSLLTAIGSFVIYII. Residues 261-502 are Cytoplasmic-facing; sequence YNKRINNYNL…YNNGIRGKIK (242 aa). Positions 311 to 335 are enriched in polar residues; that stretch reads AHNNTSNGTKQNQVGNGTKSNNNNV. 2 disordered regions span residues 311-364 and 392-444; these read AHNN…SVEA and TNMN…KNME. Over residues 342-352 the composition is skewed to basic and acidic residues; it reads KNVKSQQDDSK. The segment covering 395–433 has biased composition (low complexity); the sequence is NENNNNSNKNNNSNKNNNSNKNNNSNKNNNSNNGNSNEG. Residues 503–523 traverse the membrane as a helical segment; the sequence is VQWYILLFGGLSMSLGLSIMG. The Extracellular segment spans residues 524–542; sequence YRVIKTVGMKLIKITPARG. The helical transmembrane segment at 543-563 threads the bilayer; the sequence is FTIELISGLVVLFFSICGIPL. Over 564–632 the chain is Cytoplasmic; sequence SSTHCAVSSV…TSCVNLRLFR (69 aa). A helical transmembrane segment spans residues 633–653; sequence TVFLSWILTVVFSATVTAGIY. Topologically, residues 654–669 are extracellular; the sequence is SFAAYSPSYIMKMQTV.

Belongs to the inorganic phosphate transporter (PiT) (TC 2.A.20) family.

It is found in the cell membrane. The enzyme catalyses 2 Na(+)(out) + phosphate(out) = 2 Na(+)(in) + phosphate(in). Functionally, sodium-phosphate symporter which preferentially transports the monovalent form of phosphate with a stoichiometry of two sodium ions per phosphate ion. This chain is Sodium-dependent phosphate transporter, found in Plasmodium falciparum.